A 140-amino-acid chain; its full sequence is Putative pre-16S rRNA nuclease (140 aa).

The protein belongs to the YqgF nuclease family.

The protein localises to the cytoplasm. Could be a nuclease involved in processing of the 5'-end of pre-16S rRNA. The sequence is that of Putative pre-16S rRNA nuclease from Moorella thermoacetica (strain ATCC 39073 / JCM 9320).